The following is a 1778-amino-acid chain: Ankyrin repeat domain-containing protein 36C (1778 aa).

ANK repeat units follow at residues 64–93 (KERTALHLACATGQPEMVHLLVSRRCELNL), 97–126 (EDRTPLIKAVQLRQEACATLLLQNGADPNI), 130–159 (FGRTALHYAVYNEDTSMIEKLLSYGANIEE), 163–192 (DEYPPLFLAVSQRKVKMVEFLLKKKANINA), and 196–225 (LGRSALIHAVTLGEKDIVILLLQHNIDVFS). Disordered stretches follow at residues 260–365 (LSIN…DEQK), 501–526 (ALPATGQKANVSPEQPPLFTHTVKDS), 538–653 (DSLT…QKQS), 671–1027 (RITG…QKQL), and 1051–1072 (IRGTVSSQRQPALKATGDEKDS). 2 stretches are compositionally biased toward polar residues: residues 261-272 (SINSNPVSSQKQ) and 297-306 (KSGTVSSQKQ). Residues 539 to 555 (SLTSSEESSERPPLSTL) are compositionally biased toward low complexity. Basic and acidic residues-rich tracts occupy residues 585–596 (PAEKATSDDKDS) and 619–630 (PAEKATSDEKDS). Polar residues-rich tracts occupy residues 631-653 (VSNIATEIKEGQQSGTVSPQKQS) and 679-691 (GTVSSQKQPPSKA). The segment covering 794–813 (TSDEKDSFSNITREKKDGEI) has biased composition (basic and acidic residues). Position 829 is a phosphoserine (S829). Composition is skewed to basic and acidic residues over residues 840 to 849 (RGKEDGEKTR) and 862 to 881 (TSDEKDSFSNITREKKDGET). S897 is modified (phosphoserine). The span at 907–917 (AREKKDGEKSR) shows a compositional bias: basic and acidic residues. Over residues 942 to 955 (RGKKHGEKTRRVSS) the composition is skewed to basic residues. Composition is skewed to polar residues over residues 983-992 (ISGTVSSQKQ) and 1005-1026 (VSNIPTEIKDGQQSGTVSSQKQ). 4 coiled-coil regions span residues 1157–1187 (EQDLEMASEGEQKRLEEYENNQPQVKNQIHS), 1247–1333 (ELKD…YRIE), 1362–1480 (SETD…DHDQ), and 1544–1768 (VFEH…ILQH).

This sequence belongs to the ANKRD36 family.

The chain is Ankyrin repeat domain-containing protein 36C (ANKRD36C) from Homo sapiens (Human).